We begin with the raw amino-acid sequence, 248 residues long: DNA polymerase sliding clamp 2 (248 aa).

Belongs to the PCNA family. In terms of assembly, the subunits circularize to form a toroid; DNA passes through its center. Replication factor C (RFC) is required to load the toroid on the DNA. Forms a dimeric complex with PCNA3 and trimeric complexes PCNA123 and PCNA323; does not form homotrimers. Crystal structures show a heterotetramer of 2 PCNA2 and 2 PCNA3, which would be large enough to clamp a Holliday junction.

In terms of biological role, sliding clamp subunit that acts as a moving platform for DNA processing. Responsible for tethering the catalytic subunit of DNA polymerase and other proteins to DNA during high-speed replication. Both trimeric complexes inhibit DNA ligase and both 3'-5' and 5'-3' activity of Hel308 (Hjm) helicase, but stimulate Hjc, the Holliday junction cleavage enzyme. This chain is DNA polymerase sliding clamp 2, found in Sulfurisphaera tokodaii (strain DSM 16993 / JCM 10545 / NBRC 100140 / 7) (Sulfolobus tokodaii).